The sequence spans 176 residues: Interleukin-7 (176 aa).

The signal sequence occupies residues 1–25 (MFHVSFRYIFGIPPLILVLLPVASS). Cystine bridges form between Cys-27–Cys-165, Cys-58–Cys-153, and Cys-71–Cys-116. N-linked (GlcNAc...) asparagine glycosylation is found at Asn-94, Asn-115, and Asn-140. The tract at residues 118-143 (SKGKGRKPPSLSEAQPTKNLEENKSS) is disordered.

It belongs to the IL-7/IL-9 family. In terms of assembly, interacts with IL7R and CSF2RG.

The protein localises to the secreted. Hematopoietic cytokine that plays an essential role in the development, expansion, and survival of naive and memory T-cells and B-cells thereby regulating the number of mature lymphocytes and maintaining lymphoid homeostasis. Mechanistically, exerts its biological effects through a receptor composed of IL7RA subunit and the cytokine receptor common subunit gamma/CSF2RG. Binding to the receptor leads to activation of various kinases including JAK1 or JAK3 depending on the cell type and subsequently propagation of signals through activation of several downstream signaling pathways including the PI3K/Akt/mTOR or the JAK-STAT5. This chain is Interleukin-7 (IL7), found in Bos taurus (Bovine).